The sequence spans 92 residues: Acylphosphatase (92 aa).

Cys-5 and Cys-49 are oxidised to a cystine. The 88-residue stretch at 5–92 folds into the Acylphosphatase-like domain; that stretch reads CIIAWIYGRV…SGELTDFRIR (88 aa). Residues Arg-20 and Asn-38 contribute to the active site.

The protein belongs to the acylphosphatase family.

It catalyses the reaction an acyl phosphate + H2O = a carboxylate + phosphate + H(+). This chain is Acylphosphatase, found in Shigella boydii serotype 4 (strain Sb227).